We begin with the raw amino-acid sequence, 179 residues long: Large ribosomal subunit protein uL5 (179 aa).

The protein belongs to the universal ribosomal protein uL5 family. As to quaternary structure, part of the 50S ribosomal subunit; part of the 5S rRNA/L5/L18/L25 subcomplex. Contacts the 5S rRNA and the P site tRNA. Forms a bridge to the 30S subunit in the 70S ribosome.

In terms of biological role, this is one of the proteins that bind and probably mediate the attachment of the 5S RNA into the large ribosomal subunit, where it forms part of the central protuberance. In the 70S ribosome it contacts protein S13 of the 30S subunit (bridge B1b), connecting the 2 subunits; this bridge is implicated in subunit movement. Contacts the P site tRNA; the 5S rRNA and some of its associated proteins might help stabilize positioning of ribosome-bound tRNAs. The polypeptide is Large ribosomal subunit protein uL5 (Staphylococcus saprophyticus subsp. saprophyticus (strain ATCC 15305 / DSM 20229 / NCIMB 8711 / NCTC 7292 / S-41)).